The sequence spans 379 residues: Cytochrome b (379 aa).

Helical transmembrane passes span 33-53, 77-98, 113-133, and 178-198; these read FGSLLGICLMIQILTGLFLAM, WLIRYLHANGASMFFICLFIHV, WNIGIILFFTTMATAFVGYVL, and FFAFHFILPFIITAFVLVHLL. Heme b contacts are provided by His-83 and His-97. 2 residues coordinate heme b: His-182 and His-196. His-201 serves as a coordination point for a ubiquinone. 4 consecutive transmembrane segments (helical) span residues 226–246, 288–308, 320–340, and 347–367; these read IKDLLGILLLLMALMILALFF, LGGVLALILSILILAAFPLLN, ITQTIYWTFIANLLILTWIGG, and FTMXGXIASITYFIIIIILMP.

This sequence belongs to the cytochrome b family. As to quaternary structure, the cytochrome bc1 complex contains 11 subunits: 3 respiratory subunits (MT-CYB, CYC1 and UQCRFS1), 2 core proteins (UQCRC1 and UQCRC2) and 6 low-molecular weight proteins (UQCRH/QCR6, UQCRB/QCR7, UQCRQ/QCR8, UQCR10/QCR9, UQCR11/QCR10 and a cleavage product of UQCRFS1). This cytochrome bc1 complex then forms a dimer. The cofactor is heme b.

It is found in the mitochondrion inner membrane. Functionally, component of the ubiquinol-cytochrome c reductase complex (complex III or cytochrome b-c1 complex) that is part of the mitochondrial respiratory chain. The b-c1 complex mediates electron transfer from ubiquinol to cytochrome c. Contributes to the generation of a proton gradient across the mitochondrial membrane that is then used for ATP synthesis. The protein is Cytochrome b (MT-CYB) of Necromys amoenus (Pleasant bolo mouse).